We begin with the raw amino-acid sequence, 353 residues long: Peptide methionine sulfoxide reductase MsrA/MsrB (353 aa).

The segment at 43–196 is peptide methionine sulfoxide reductase A; sequence REIYLAGGCF…PNGYCHIDIT (154 aa). Cysteine 51 is an active-site residue. A MsrB domain is found at 213–336; that stretch reads DAELKAKLTP…NSASIKFIPL (124 aa). The Nucleophile role is filled by cysteine 325.

The protein in the N-terminal section; belongs to the MsrA Met sulfoxide reductase family. In the C-terminal section; belongs to the MsrB Met sulfoxide reductase family.

It carries out the reaction L-methionyl-[protein] + [thioredoxin]-disulfide + H2O = L-methionyl-(S)-S-oxide-[protein] + [thioredoxin]-dithiol. It catalyses the reaction [thioredoxin]-disulfide + L-methionine + H2O = L-methionine (S)-S-oxide + [thioredoxin]-dithiol. The catalysed reaction is L-methionyl-[protein] + [thioredoxin]-disulfide + H2O = L-methionyl-(R)-S-oxide-[protein] + [thioredoxin]-dithiol. Has an important function as a repair enzyme for proteins that have been inactivated by oxidation. Catalyzes the reversible oxidation-reduction of methionine sulfoxide in proteins to methionine. This chain is Peptide methionine sulfoxide reductase MsrA/MsrB (msrAB), found in Haemophilus influenzae (strain ATCC 51907 / DSM 11121 / KW20 / Rd).